A 293-amino-acid chain; its full sequence is Immediate early response gene 5-like protein (293 aa).

This sequence belongs to the IER family.

This Xenopus laevis (African clawed frog) protein is Immediate early response gene 5-like protein (ier5l).